A 365-amino-acid chain; its full sequence is Transcription factor KUA1 (365 aa).

A disordered region spans residues 1-21; it reads MTRRCSHCNHNGHNSRTCPNR. The CCHC-type zinc finger occupies 3-20; sequence RRCSHCNHNGHNSRTCPN. Polar residues predominate over residues 8–18; the sequence is CNHNGHNSRTC. The short motif at 24–28 is the R/KLFGV (transcriptional repression) element; the sequence is KLFGV. The tract at residues 41–99 is disordered; the sequence is MGNLSHYTGSGSGGHGTGSNTPGSPGDVPDHVAGDGYASEDFVAGSSSSRERKKGTPWT. The region spanning 90–146 is the HTH myb-type domain; the sequence is RERKKGTPWTEEEHRMFLLGLQKLGKGDWRGISRNYVTTRTPTQVASHAQKYFIRQS. The segment at residues 118–142 is a DNA-binding region (H-T-H motif); sequence WRGISRNYVTTRTPTQVASHAQKYF. 2 disordered regions span residues 214-254 and 321-365; these read SMDS…QPQL and ESNK…IHAL. Residues 220–254 are compositionally biased toward low complexity; that stretch reads STTGEPTATAAAASSSSRLEETTQLQSQLQPQPQL. Residues 343–355 are compositionally biased toward polar residues; sequence RQSAFHPNPSSDS.

As to expression, expressed ubiquitously, except in hypocotyls, root tips and lateral root primordia.

The protein resides in the nucleus. Transcriptional repressor. Direct regulator of the transcription of peroxidase (Prxs) and reactive oxygen species (ROS)-related genes via the recognition of 5'-ATCACA-3' motif. Binds to 5'-TATCCA-3' motif (TA box) and represses the activity of corresponding promoters (e.g. sugar response genes). Regulates hypocotyl elongation in response to darkness by enhancing auxin accumulation in a phytochrome-interacting factor (PIF) proteins-dependent manner. Promotes lateral roots formation. Promotes cell expansion during leaves development via the modulation of cell wall-located Prxs. Plays a critical role in developmentally regulated and dark-induced onset of leaf senescence by repressing the transcription of several genes involved in chloroplast function and responses to light and auxin. Promotes responses to auxin, abscisic acid (ABA), and ethylene. This chain is Transcription factor KUA1, found in Arabidopsis thaliana (Mouse-ear cress).